The sequence spans 346 residues: MSGTDHEAVSATEARRLFADWKAAPAIVLAVSGGPDSLALMWLAARWRKALKRGPALAVVTVDHGLRPEAAAEARAVKRLAASLDLPHRTLRWSGDKPSTGIQAAARGARYRLLAKAAKTLGASHVMTAHTRDDQAETVLMRLSRGSGIAGLAAMAREIERDGVVLARPLLDVPKARLIATLAKARIAFATDPSNADPRFTRPRLRELMPQLAAEGCDARSLVRLAVRAARADAALELMTDGAEQFLASLDAGSERPGVNARAFLGLAAEIQIRLLLRTLSRHGHEGPPELGKVEALAEALSQAAARRPQAAAKIRLKQTLAGAVISLTGDRLVIVPAPPRRGRVR.

An ATP-binding site is contributed by 32-37 (SGGPDS).

This sequence belongs to the tRNA(Ile)-lysidine synthase family.

It is found in the cytoplasm. The enzyme catalyses cytidine(34) in tRNA(Ile2) + L-lysine + ATP = lysidine(34) in tRNA(Ile2) + AMP + diphosphate + H(+). Functionally, ligates lysine onto the cytidine present at position 34 of the AUA codon-specific tRNA(Ile) that contains the anticodon CAU, in an ATP-dependent manner. Cytidine is converted to lysidine, thus changing the amino acid specificity of the tRNA from methionine to isoleucine. This Rhodopseudomonas palustris (strain ATCC BAA-98 / CGA009) protein is tRNA(Ile)-lysidine synthase.